The primary structure comprises 550 residues: Medium-chain acyl-CoA ligase Mig (550 aa).

The first 19 residues, 1 to 19 (MSDTTTAFTVPAVAKAVAA), serve as a signal peptide directing secretion.

This sequence belongs to the ATP-dependent AMP-binding enzyme family.

It is found in the secreted. Its subcellular location is the cell wall. The enzyme catalyses a medium-chain fatty acid + ATP + CoA = a medium-chain fatty acyl-CoA + AMP + diphosphate. The catalysed reaction is hexanoate + ATP + CoA = hexanoyl-CoA + AMP + diphosphate. It catalyses the reaction heptanoate + ATP + CoA = heptanoyl-CoA + AMP + diphosphate. It carries out the reaction octanoate + ATP + CoA = octanoyl-CoA + AMP + diphosphate. The enzyme catalyses decanoate + ATP + CoA = decanoyl-CoA + AMP + diphosphate. The catalysed reaction is dodecanoate + ATP + CoA = dodecanoyl-CoA + AMP + diphosphate. It catalyses the reaction tetradecanoate + ATP + CoA = tetradecanoyl-CoA + AMP + diphosphate. It carries out the reaction (9Z)-octadecenoate + ATP + CoA = (9Z)-octadecenoyl-CoA + AMP + diphosphate. The enzyme catalyses (9Z,12Z,15Z)-octadecatrienoate + ATP + CoA = (9Z,12Z,15Z)-octadecatrienoyl-CoA + AMP + diphosphate. The catalysed reaction is (5Z,8Z,11Z,14Z)-eicosatetraenoate + ATP + CoA = (5Z,8Z,11Z,14Z)-eicosatetraenoyl-CoA + AMP + diphosphate. It participates in lipid metabolism; fatty acid metabolism. Inhibited by 2-hydroxydodecanoic acid, a typical inhibitor of medium-chain acyl-CoA synthetases. Its function is as follows. Catalyzes the activation of medium-chain fatty acids as acyl-coenzyme A (acyl-CoA). Shows maximal activity with saturated fatty acids of medium-chain length between C6 and C12. Has lower activity with tridecanoic acid (C13), tetradecanoic acid (C14) and with unsaturated fatty acids like oleic acid (C18:1), linolenic acid (C18:3) and arachidonic acid (C20:4). Shows weak activity with some aromatic carbon acids. Involved in the metabolism of fatty acid during mycobacterial survival in macrophages. In Mycobacterium avium, this protein is Medium-chain acyl-CoA ligase Mig.